The chain runs to 97 residues: C-C motif chemokine 7 (97 aa).

The N-terminal stretch at Met1–Ala23 is a signal peptide. At Gln24 the chain carries Pyrrolidone carboxylic acid. Asn29 carries N-linked (GlcNAc...) asparagine glycosylation. 2 cysteine pairs are disulfide-bonded: Cys33–Cys57 and Cys34–Cys73.

It belongs to the intercrine beta (chemokine CC) family. In terms of assembly, monomer. Interacts with TNFAIP6 (via Link domain).

It is found in the secreted. Functionally, chemotactic factor that attracts monocytes and eosinophils, but not neutrophils. Augments monocyte anti-tumor activity. In Rattus norvegicus (Rat), this protein is C-C motif chemokine 7 (Ccl7).